Reading from the N-terminus, the 472-residue chain is 2-oxoglutarate carboxylase small subunit (472 aa).

Residues 1–445 (MFKKVLVANR…TTRYLEEHPH (445 aa)) form the Biotin carboxylation domain. ATP contacts are provided by Lys115 and Glu199. The region spanning 119 to 316 (KEVMKRAGVP…IVKWQIRIAA (198 aa)) is the ATP-grasp domain. Arg291 is an active-site residue.

As to quaternary structure, heterohexadecamer of 8 large subunits and 8 small subunits. The cofactor is Mg(2+). Mn(2+) serves as cofactor. It depends on Co(2+) as a cofactor.

The catalysed reaction is hydrogencarbonate + 2-oxoglutarate + ATP = (S)-oxalosuccinate + ADP + phosphate + H(+). This Hydrogenobacter thermophilus (strain DSM 6534 / IAM 12695 / TK-6) protein is 2-oxoglutarate carboxylase small subunit.